Reading from the N-terminus, the 257-residue chain is Imidazole glycerol phosphate synthase subunit HisF (257 aa).

Residues D11 and D130 contribute to the active site.

The protein belongs to the HisA/HisF family. In terms of assembly, heterodimer of HisH and HisF.

The protein localises to the cytoplasm. The enzyme catalyses 5-[(5-phospho-1-deoxy-D-ribulos-1-ylimino)methylamino]-1-(5-phospho-beta-D-ribosyl)imidazole-4-carboxamide + L-glutamine = D-erythro-1-(imidazol-4-yl)glycerol 3-phosphate + 5-amino-1-(5-phospho-beta-D-ribosyl)imidazole-4-carboxamide + L-glutamate + H(+). Its pathway is amino-acid biosynthesis; L-histidine biosynthesis; L-histidine from 5-phospho-alpha-D-ribose 1-diphosphate: step 5/9. Functionally, IGPS catalyzes the conversion of PRFAR and glutamine to IGP, AICAR and glutamate. The HisF subunit catalyzes the cyclization activity that produces IGP and AICAR from PRFAR using the ammonia provided by the HisH subunit. The chain is Imidazole glycerol phosphate synthase subunit HisF from Shewanella baltica (strain OS223).